A 288-amino-acid chain; its full sequence is Phosphatidylglycerol--prolipoprotein diacylglyceryl transferase (288 aa).

A run of 4 helical transmembrane segments spans residues 18 to 38 (WSLR…LACL), 68 to 88 (FFIY…VIFY), 107 to 127 (GLSS…FSWI), and 135 to 155 (LTFL…AFFI). R156 contacts a 1,2-diacyl-sn-glycero-3-phospho-(1'-sn-glycerol). The next 3 helical transmembrane spans lie at 193–213 (VQLY…FLSY), 222–242 (GYVT…AEYV), and 256–276 (LTIG…LLII).

The protein belongs to the Lgt family.

Its subcellular location is the cell inner membrane. The enzyme catalyses L-cysteinyl-[prolipoprotein] + a 1,2-diacyl-sn-glycero-3-phospho-(1'-sn-glycerol) = an S-1,2-diacyl-sn-glyceryl-L-cysteinyl-[prolipoprotein] + sn-glycerol 1-phosphate + H(+). Its pathway is protein modification; lipoprotein biosynthesis (diacylglyceryl transfer). Its function is as follows. Catalyzes the transfer of the diacylglyceryl group from phosphatidylglycerol to the sulfhydryl group of the N-terminal cysteine of a prolipoprotein, the first step in the formation of mature lipoproteins. This Chlamydia pneumoniae (Chlamydophila pneumoniae) protein is Phosphatidylglycerol--prolipoprotein diacylglyceryl transferase.